We begin with the raw amino-acid sequence, 401 residues long: ADP-forming sulfoacetate-CoA ligase subunit SqwK (401 aa).

The ATP-grasp domain maps to 9–217; sequence KTVFSEHKIP…DNSVFRQPRF (209 aa). Residue 35–96 participates in ATP binding; the sequence is KSVGFPSVVK…EEAVHIDKEI (62 aa). Residues Glu185 and Asn187 each coordinate Mg(2+).

Belongs to the succinate/malate CoA ligase beta subunit family. Forms a complex with SqwL. The cofactor is Mg(2+).

It catalyses the reaction sulfoacetate + ATP + CoA = sulfoacetyl-CoA + ADP + phosphate. Part of a variant of the sulfo-TK pathway, a D-sulfoquinovose degradation pathway that produces sulfoacetate. Hydrolyzes sulfoacetyl-coenzyme A (sulfoacetyl-CoA) to produce sulfoacetate and CoA coupled with the phosphorylation of ADP to generate ATP. Cannot use succinate, acetate or 3-hydroxypropionate, and shows only residual activities with malonate and 3-sulfopropanoate. The polypeptide is ADP-forming sulfoacetate-CoA ligase subunit SqwK (Acholeplasma sp).